The primary structure comprises 740 residues: NAD(P)H-quinone oxidoreductase subunit 5, chloroplastic (740 aa).

Helical transmembrane passes span 9 to 29, 40 to 60, 89 to 109, 125 to 145, 147 to 167, 185 to 205, 219 to 239, 258 to 278, 290 to 310, 327 to 347, 354 to 374, 396 to 416, 425 to 445, 521 to 538, 545 to 565, 599 to 619, and 720 to 740; these read WIIPFIPLPVTVLVGLGLLVV, WAFISVLLLSIALLFSINISI, IDSLTSIMLILITTVGIMVLI, FAYLNFFNASMLGLVTSSNLI, IYIFWELVGMCSYLLIGFWFT, GDFGLLLGILGLYWITGSFEF, NTINLFFAALCASLLFLGAIA, TPISALIHAATMVAAGIFLVA, IMYFISLIGIITVLLGATLAL, LGYIMLAMGIGSYRAALFHLI, ALLFLGSGSIIHSMEPIVGYS, TTFLLGTLSLCGIPPLACFWS, WLYSPIFAIIAYSTAGLTAFY, MFSFSIFFGNEIVFPYPH, LLSVCVLGLFTLFVGFIGIPL, FVINAIFSVSIALFGIFIASF, and YLFVYLSYVSVFLVVIYYFVL.

This sequence belongs to the complex I subunit 5 family. In terms of assembly, NDH is composed of at least 16 different subunits, 5 of which are encoded in the nucleus.

The protein resides in the plastid. Its subcellular location is the chloroplast thylakoid membrane. The enzyme catalyses a plastoquinone + NADH + (n+1) H(+)(in) = a plastoquinol + NAD(+) + n H(+)(out). It carries out the reaction a plastoquinone + NADPH + (n+1) H(+)(in) = a plastoquinol + NADP(+) + n H(+)(out). Functionally, NDH shuttles electrons from NAD(P)H:plastoquinone, via FMN and iron-sulfur (Fe-S) centers, to quinones in the photosynthetic chain and possibly in a chloroplast respiratory chain. The immediate electron acceptor for the enzyme in this species is believed to be plastoquinone. Couples the redox reaction to proton translocation, and thus conserves the redox energy in a proton gradient. The chain is NAD(P)H-quinone oxidoreductase subunit 5, chloroplastic (ndhF) from Piper cenocladum (Ant piper).